A 49-amino-acid chain; its full sequence is Defensin Tk-AMP-D1 (49 aa).

Intrachain disulfides connect cysteine 3–cysteine 49, cysteine 14–cysteine 34, cysteine 20–cysteine 43, and cysteine 24–cysteine 45.

Functionally, has weak antifungal activity against F.graminearum and F.verticillioides below 30 ug/ml, but not against A.consortiale B.cinerea, H.sativum, F.culmorum, C.graminicola and D.maydis. The chain is Defensin Tk-AMP-D1 from Triticum kiharae (Wheat).